Here is a 185-residue protein sequence, read N- to C-terminus: MISASDFRKGVTFEMNGEPYVVLDFQHVKPGKGAAFVRTKYKNLKNGGTREEAFNPSDKFPKAHIETKEMQYLYSDGELYYFMDNETFEQTPLTYEEVEDAIKFLKENDNATIKFYHGKPFQVDPPNFVELQITETEPGVKGDTASNVTKTATVETGAVIHVPLFVNEGDTVRIDTRTGEYMSRV.

It belongs to the elongation factor P family.

The protein localises to the cytoplasm. The protein operates within protein biosynthesis; polypeptide chain elongation. Involved in peptide bond synthesis. Stimulates efficient translation and peptide-bond synthesis on native or reconstituted 70S ribosomes in vitro. Probably functions indirectly by altering the affinity of the ribosome for aminoacyl-tRNA, thus increasing their reactivity as acceptors for peptidyl transferase. The polypeptide is Elongation factor P (Alkaliphilus oremlandii (strain OhILAs) (Clostridium oremlandii (strain OhILAs))).